Consider the following 362-residue polypeptide: E3 ubiquitin-protein ligase TM129 (362 aa).

The Lumenal segment spans residues 1-6 (MDSPEV). The helical transmembrane segment at 7-27 (TFTLAYLVFAVCFVFTPTEFH) threads the bilayer. The Cytoplasmic segment spans residues 28 to 56 (SAGLTVQNLLSGWLGSEDAAFVPYHLRRT). The helical transmembrane segment at 57 to 77 (AATLLCHSLLPLGYYVGMCFA) threads the bilayer. Residues 78 to 94 (ASEKQLYYPSQTPETWR) are Lumenal-facing. Residues 95–115 (AFLLLALMLPAIACTLIYYWS) traverse the membrane as a helical segment. Residues 116–362 (RDHWACHPLA…FCVLDVCAVR (247 aa)) lie on the Cytoplasmic side of the membrane. The RING-type; degenerate zinc-finger motif lies at 285–350 (CIGCMQTQAS…ASRVPCPTCR (66 aa)).

It belongs to the TMEM129 family. Integral component of ER-resident dislocation complexes.

Its subcellular location is the endoplasmic reticulum membrane. It carries out the reaction S-ubiquitinyl-[E2 ubiquitin-conjugating enzyme]-L-cysteine + [acceptor protein]-L-lysine = [E2 ubiquitin-conjugating enzyme]-L-cysteine + N(6)-ubiquitinyl-[acceptor protein]-L-lysine.. It functions in the pathway protein modification; protein ubiquitination. Functionally, E3 ubiquitin-protein ligase involved in ER-associated protein degradation, preferentially associates with the E2 enzyme UBE2J2. Exploited by viral US11 proteins to mediate HLA class I proteins degradation. This chain is E3 ubiquitin-protein ligase TM129 (TMEM129), found in Bos taurus (Bovine).